A 97-amino-acid chain; its full sequence is Putative pterin-4-alpha-carbinolamine dehydratase (97 aa).

The protein belongs to the pterin-4-alpha-carbinolamine dehydratase family.

It carries out the reaction (4aS,6R)-4a-hydroxy-L-erythro-5,6,7,8-tetrahydrobiopterin = (6R)-L-erythro-6,7-dihydrobiopterin + H2O. This chain is Putative pterin-4-alpha-carbinolamine dehydratase, found in Phenylobacterium zucineum (strain HLK1).